Consider the following 285-residue polypeptide: OPEP-3 protein (285 aa).

This chain is OPEP-3 protein (OPEP-3), found in Orgyia pseudotsugata multicapsid polyhedrosis virus (OpMNPV).